A 257-amino-acid polypeptide reads, in one-letter code: Phosphonates import ATP-binding protein PhnC (257 aa).

Residues Ile-4 to Ile-248 enclose the ABC transporter domain.

It belongs to the ABC transporter superfamily. Phosphonates importer (TC 3.A.1.9.1) family. As to quaternary structure, the complex is composed of two ATP-binding proteins (PhnC), two transmembrane proteins (PhnE) and a solute-binding protein (PhnD).

Its subcellular location is the cell membrane. The enzyme catalyses phosphonate(out) + ATP + H2O = phosphonate(in) + ADP + phosphate + H(+). In terms of biological role, part of the ABC transporter complex PhnCDE involved in phosphonates import. Responsible for energy coupling to the transport system. The protein is Phosphonates import ATP-binding protein PhnC of Staphylococcus epidermidis (strain ATCC 35984 / DSM 28319 / BCRC 17069 / CCUG 31568 / BM 3577 / RP62A).